Reading from the N-terminus, the 568-residue chain is PWWP domain-containing protein2 (568 aa).

Residues 1 to 19 (MTEIKDSSVKDENPGKQEE) show a composition bias toward basic and acidic residues. Disordered stretches follow at residues 1–126 (MTEI…YKPG), 213–340 (QSTP…DVAK), and 465–568 (IASL…TGQK). The segment covering 29-46 (MSTATNNSKNIETTSSNG) has biased composition (polar residues). 2 stretches are compositionally biased toward basic and acidic residues: residues 48–88 (EDIK…KTIE) and 100–122 (KSQK…ERVN). Positions 125–189 (PGMRVLTKMS…SDSLTPLTSE (65 aa)) constitute a PWWP domain. The segment covering 214–228 (STPDLDSLSVPSSES) has biased composition (low complexity). A compositionally biased stretch (acidic residues) spans 229–249 (EVSEEESDQEMSEPSPIEEDY). The span at 255–266 (RRITRKGTKKKT) shows a compositional bias: basic residues. The span at 281 to 292 (LNASSNVSSNPA) shows a compositional bias: polar residues. A compositionally biased stretch (acidic residues) spans 325–336 (KEEEEGSVANEE). Composition is skewed to basic and acidic residues over residues 489–500 (KQNEDNEDKVKA) and 514–541 (DASK…KDFA).

The chain is PWWP domain-containing protein2 (pdp2) from Schizosaccharomyces pombe (strain 972 / ATCC 24843) (Fission yeast).